The following is a 924-amino-acid chain: Protein translocase subunit SecA (924 aa).

ATP-binding positions include glutamine 87, 105-109, and aspartate 515; that span reads GEGKT. The Zn(2+) site is built by cysteine 908, cysteine 910, cysteine 919, and histidine 920.

This sequence belongs to the SecA family. As to quaternary structure, monomer and homodimer. Part of the essential Sec protein translocation apparatus which comprises SecA, SecYEG and auxiliary proteins SecDF-YajC and YidC. It depends on Zn(2+) as a cofactor.

It is found in the cell inner membrane. It localises to the cytoplasm. The enzyme catalyses ATP + H2O + cellular proteinSide 1 = ADP + phosphate + cellular proteinSide 2.. Functionally, part of the Sec protein translocase complex. Interacts with the SecYEG preprotein conducting channel. Has a central role in coupling the hydrolysis of ATP to the transfer of proteins into and across the cell membrane, serving both as a receptor for the preprotein-SecB complex and as an ATP-driven molecular motor driving the stepwise translocation of polypeptide chains across the membrane. The protein is Protein translocase subunit SecA of Cupriavidus pinatubonensis (strain JMP 134 / LMG 1197) (Cupriavidus necator (strain JMP 134)).